A 519-amino-acid polypeptide reads, in one-letter code: Aldehyde dehydrogenase X, mitochondrial (519 aa).

A mitochondrion-targeting transit peptide spans 1 to 19 (MLNARFLVPRLLCLQGRTT). K53 is subject to N6-acetyllysine. Position 54 is an N6-acetyllysine; alternate (K54). N6-succinyllysine; alternate is present on K54. 264–269 (GSTEVG) contacts NAD(+). Residue E287 is the Proton acceptor of the active site. C321 functions as the Nucleophile in the catalytic mechanism. K366, K385, K401, and K428 each carry N6-acetyllysine; alternate. N6-succinyllysine; alternate occurs at positions 366, 385, 401, and 428. K431 bears the N6-acetyllysine mark.

This sequence belongs to the aldehyde dehydrogenase family. In terms of assembly, homotetramer.

It localises to the mitochondrion matrix. It catalyses the reaction an aldehyde + NAD(+) + H2O = a carboxylate + NADH + 2 H(+). It participates in alcohol metabolism; ethanol degradation; acetate from ethanol: step 2/2. In terms of biological role, ALDHs play a major role in the detoxification of alcohol-derived acetaldehyde. They are involved in the metabolism of corticosteroids, biogenic amines, neurotransmitters, and lipid peroxidation. This Rattus norvegicus (Rat) protein is Aldehyde dehydrogenase X, mitochondrial (Aldh1b1).